Consider the following 181-residue polypeptide: ATP synthase subunit delta (181 aa).

It belongs to the ATPase delta chain family. As to quaternary structure, F-type ATPases have 2 components, F(1) - the catalytic core - and F(0) - the membrane proton channel. F(1) has five subunits: alpha(3), beta(3), gamma(1), delta(1), epsilon(1). F(0) has three main subunits: a(1), b(2) and c(10-14). The alpha and beta chains form an alternating ring which encloses part of the gamma chain. F(1) is attached to F(0) by a central stalk formed by the gamma and epsilon chains, while a peripheral stalk is formed by the delta and b chains.

The protein resides in the cell membrane. Functionally, f(1)F(0) ATP synthase produces ATP from ADP in the presence of a proton or sodium gradient. F-type ATPases consist of two structural domains, F(1) containing the extramembraneous catalytic core and F(0) containing the membrane proton channel, linked together by a central stalk and a peripheral stalk. During catalysis, ATP synthesis in the catalytic domain of F(1) is coupled via a rotary mechanism of the central stalk subunits to proton translocation. Its function is as follows. This protein is part of the stalk that links CF(0) to CF(1). It either transmits conformational changes from CF(0) to CF(1) or is implicated in proton conduction. This chain is ATP synthase subunit delta, found in Priestia megaterium (strain ATCC 12872 / QMB1551) (Bacillus megaterium).